The chain runs to 811 residues: tRNA(Met) cytidine acetyltransferase TmcA (811 aa).

ATP-binding residues include Q267 and R440. One can recognise an N-acetyltransferase domain in the interval 474–663; it reads RKEVYLEEPD…GEFTAIVLKP (190 aa). Residues 590-592, E630, and R637 each bind acetyl-CoA; that span reads IAT.

It belongs to the TmcA family.

The protein localises to the cytoplasm. The enzyme catalyses cytidine(34) in elongator tRNA(Met) + acetyl-CoA + ATP + H2O = N(4)-acetylcytidine(34) in elongator tRNA(Met) + ADP + phosphate + CoA + H(+). It carries out the reaction a cytidine in RNA + acetyl-CoA + ATP + H2O = an N(4)-acetylcytidine in RNA + ADP + phosphate + CoA + H(+). It catalyses the reaction a cytidine in tRNA + acetyl-CoA + ATP + H2O = an N(4)-acetylcytidine in tRNA + ADP + phosphate + CoA + H(+). The catalysed reaction is a cytidine in mRNA + acetyl-CoA + ATP + H2O = an N(4)-acetylcytidine in mRNA + ADP + phosphate + CoA + H(+). Its function is as follows. Catalyzes the formation of N(4)-acetylcytidine (ac(4)C) at the wobble position of tRNA(Met), by using acetyl-CoA as an acetyl donor and ATP (or GTP). Catalyzes the formation of 404 N(4)-acetylcytidine (ac(4)C) sites in RNA, almost always on the middle C of a CCG motif. There 173 ac(4)C sites in rRNA, 35 in non-coding (nc)RNA, 119 in mRNA and 77 in tRNA. More acetylation is observed at 85 and 95 than at 65 or 75 degrees Celsius. The protein is tRNA(Met) cytidine acetyltransferase TmcA of Thermococcus kodakarensis (strain ATCC BAA-918 / JCM 12380 / KOD1) (Pyrococcus kodakaraensis (strain KOD1)).